The primary structure comprises 668 residues: MNQNIIYTVYGDLKLTLKNMRPDVLLHNPVMFLTEVSLFVSIFIYIFPSFFGVPYTGTYRSFYVAVVVLLFLTVFFSSISTALSEGKSKAITDSLKKFKTDVIAHVQKDGNIVDVRSNELKKNDIIIIYKDEIVPIDGEVIEGSGYVDESNVTGESRAVMKVIGDTVTGSTRLVTDKLKIRATADPGSTFIDKMIELVEKSTREKTPNEISLTVFLSGLTLIFLVITASIFAISHYFGRTANIVMLIVLLIALIPTTIGALLPAIGIAAINKVSEYNIIAKSGRAIENAGDIDTIILDKTGTITIGERKAVKFYPNKGISDVEFAKLAAMSSYYDQTKEGLSIFELAKKQGAEISKDDLKGYEFIPFSSETKFSGIQSPSDTVIKGSLKALKEKFQVADEFIEALCKEISMRGGTAIPVVHNGKFAGVIELQDLIKPGIKERISEIKNMDIKTVMCTGDDEVTAQYISAQAGIDEYIANSKPVDKYNVVIREKEGQRMVAMVGDGTNDAPALAKADVGLAMNNGTQAAKEAANMIDLDSNPTKLMDVIFLGKQILITRGSLTTFSIANDISKYFVIIPAIFYMFPSLSLVNILDLTDPIVAVTSALIFNTIIIVFLIPLALGGVHYKPTSISEMLKRNLMIYGIGGVITPFIAIKLIYMLLIAWGVTW.

A run of 4 helical transmembrane segments spans residues 31 to 51 (MFLT…PSFF), 62 to 82 (FYVA…ISTA), 213 to 233 (TVFL…IFAI), and 243 to 263 (IVML…ALLP). The active-site 4-aspartylphosphate intermediate is aspartate 298. ATP-binding positions include aspartate 335, glutamate 339, 367 to 374 (FSSETKFS), and lysine 385. Aspartate 504 and aspartate 508 together coordinate Mg(2+). Transmembrane regions (helical) follow at residues 573 to 593 (YFVI…VNIL), 599 to 619 (IVAV…LIPL), and 644 to 664 (IGGV…LIAW).

This sequence belongs to the cation transport ATPase (P-type) (TC 3.A.3) family. Type IA subfamily. In terms of assembly, the system is composed of three essential subunits: KdpA, KdpB and KdpC.

Its subcellular location is the cell membrane. The enzyme catalyses K(+)(out) + ATP + H2O = K(+)(in) + ADP + phosphate + H(+). Its function is as follows. Part of the high-affinity ATP-driven potassium transport (or Kdp) system, which catalyzes the hydrolysis of ATP coupled with the electrogenic transport of potassium into the cytoplasm. This subunit is responsible for energy coupling to the transport system and for the release of the potassium ions to the cytoplasm. The polypeptide is Potassium-transporting ATPase ATP-binding subunit (Thermoplasma volcanium (strain ATCC 51530 / DSM 4299 / JCM 9571 / NBRC 15438 / GSS1)).